The following is a 601-amino-acid chain: Vesicular glutamate transporter 3 (601 aa).

The Cytoplasmic segment spans residues 1 to 89 (MPFKAFDTFK…CSCCGIPKRY (89 aa)). A helical membrane pass occupies residues 90 to 110 (IIAVMSGLGFCISFGIRCNLG). At 111–143 (VAIVEMVNNSTVYVDGKPEIQTAQFNWDPETVG) the chain is on the vesicular side. A glycan (N-linked (GlcNAc...) asparagine) is linked at Asn119. A helical transmembrane segment spans residues 144 to 164 (LIHGSFFWGYIVTQIPGGFIS). Over 165-166 (NK) the chain is Cytoplasmic. A helical membrane pass occupies residues 167–187 (FAASRVFGAAIFLTSTLNMFI). At 188–195 (PSAARVHY) the chain is on the vesicular side. A helical membrane pass occupies residues 196-216 (GCVMGVRILQGLVEGVTYPAC). At 217–234 (HGMWSKWAPPLERSRLAT) the chain is on the cytoplasmic side. The helical transmembrane segment at 235–255 (TSFCGSYAGAVVAMPLAGVLV) threads the bilayer. Over 256 to 262 (QYIGWAS) the chain is Vesicular. A helical transmembrane segment spans residues 263–283 (VFYIYGMFGIIWYMFWLLQAY). Topologically, residues 284–327 (ECPAAHPTISNAERTYIETSIGEGANLASLSKFNTPWRRFFTSL) are cytoplasmic. A helical membrane pass occupies residues 328–348 (PVYAIIVANFCRSWTFYLLLI). At 349–366 (SQPAYFEEVFGFAISKVG) the chain is on the vesicular side. The helical transmembrane segment at 367 to 387 (LLSAVPHMVMTIVVPIGGQLA) threads the bilayer. The Cytoplasmic portion of the chain corresponds to 388 to 403 (DYLRSRKILTTTAVRK). The chain crosses the membrane as a helical span at residues 404–424 (IMNCGGFGMEATLLLVVGFSH). Topologically, residues 425-426 (TK) are vesicular. A helical membrane pass occupies residues 427 to 447 (GVAISFLVLAVGFSGFAISGF). Residues 448 to 460 (NVNHLDIAPRYAS) are Cytoplasmic-facing. The chain crosses the membrane as a helical span at residues 461-481 (ILMGISNGVGTLSGMVCPLIV). The Vesicular portion of the chain corresponds to 482 to 494 (GAMTKHKTREEWQ). A helical transmembrane segment spans residues 495-515 (NVFLIAALVHYSGVIFYGVFA). Over 516–598 (SGEKQDWADP…LSYQAEGDFS (83 aa)) the chain is Cytoplasmic. The disordered stretch occupies residues 576–601 (RQQRESAFDGEEPLSYQAEGDFSETS).

It belongs to the major facilitator superfamily. Sodium/anion cotransporter family. VGLUT subfamily. As to expression, expressed in restricted areas of the brain. Highest expression is found in the neurons of the basal forebrain, the hippocampal formation, and the majority of the neurons of the mesencephalic raphe nuclei. Expressed in inner hair cells of the ear.

Its subcellular location is the cytoplasmic vesicle. It is found in the secretory vesicle. The protein localises to the synaptic vesicle membrane. It localises to the cell membrane. The protein resides in the synapse. Its subcellular location is the synaptosome. The enzyme catalyses L-glutamate(out) = L-glutamate(in). The catalysed reaction is 3 Na(+)(out) + phosphate(out) = 3 Na(+)(in) + phosphate(in). It catalyses the reaction chloride(in) = chloride(out). With respect to regulation, the L-glutamate uniporter activity exhibits a biphasic dependence on chloride concentration. Chloride channel activity is allosterically activated by lumenal H(+) and Cl(-) leading to synaptic vesicles acidification. The L-glutamate transport activity is allosterically activated by lumenal H(+) and Cl(-), preventing non-vesicular L-glutamate release. Its function is as follows. Multifunctional transporter that transports L-glutamate as well as multiple ions such as chloride, sodium and phosphate. At the synaptic vesicle membrane, mainly functions as an uniporter that mediates the uptake of L-glutamate into synaptic vesicles at presynaptic nerve terminals of excitatory neural cells. The L-glutamate uniporter activity is electrogenic and is driven by the proton electrochemical gradient, mainly by the electrical gradient established by the vacuolar H(+)-ATPase across the synaptic vesicle membrane. In addition, functions as a chloride channel that allows a chloride permeation through the synaptic vesicle membrane that affects the proton electrochemical gradient and promotes synaptic vesicles acidification. At the plasma membrane, following exocytosis, functions as a symporter of Na(+) and phosphate from the extracellular space to the cytoplasm allowing synaptic phosphate homeostasis regulation. The symporter activity is electrogenic. Moreover, operates synergistically with SLC18A3/VACHT under a constant H(+) gradient, thereby allowing striatal vesicular acetylcholine uptake. This chain is Vesicular glutamate transporter 3, found in Mus musculus (Mouse).